The primary structure comprises 353 residues: DNA replication and repair protein RecF (353 aa).

30–37 (GANGQGKT) serves as a coordination point for ATP.

This sequence belongs to the RecF family.

Its subcellular location is the cytoplasm. The RecF protein is involved in DNA metabolism; it is required for DNA replication and normal SOS inducibility. RecF binds preferentially to single-stranded, linear DNA. It also seems to bind ATP. This is DNA replication and repair protein RecF from Carboxydothermus hydrogenoformans (strain ATCC BAA-161 / DSM 6008 / Z-2901).